The chain runs to 178 residues: Caveolin-1 (178 aa).

At Ser-2 the chain carries N-acetylserine. Residue Ser-2 is modified to Phosphoserine. A required for homooligomerization region spans residues 2–94; the sequence is SGGKYVDSEG…WKASFTTFTV (93 aa). Residues 2-104 are Cytoplasmic-facing; that stretch reads SGGKYVDSEG…TKYWFYRLLS (103 aa). Residue Lys-5 is modified to N6-acetyllysine; alternate. A Glycyl lysine isopeptide (Lys-Gly) (interchain with G-Cter in ubiquitin); alternate cross-link involves residue Lys-5. The residue at position 6 (Tyr-6) is a Phosphotyrosine. Phosphoserine is present on Ser-9. Tyr-14 carries the post-translational modification Phosphotyrosine; by ABL1. Phosphotyrosine is present on Tyr-25. Residues Lys-26, Lys-30, Lys-39, Lys-47, and Lys-57 each participate in a glycyl lysine isopeptide (Lys-Gly) (interchain with G-Cter in ubiquitin) cross-link. Residues 82 to 94 are interaction with CAVIN3; sequence DGIWKASFTTFTV. The segment at residues 105-125 is an intramembrane region (helical); it reads AVFGIPMALIWGIYFAIVSFL. Over 126 to 178 the chain is Cytoplasmic; sequence HIWVVVPYIKSFLIEIQCISRVYSIYIHTFCDPLFEAFGKVFSNIRINTQKEI. The segment at 131–142 is interacts with SPRY1, SPRY2, SPRY3 and SPRY4; the sequence is VPYIKSFLIEIQ. 2 S-palmitoyl cysteine lipidation sites follow: Cys-143 and Cys-156. The tract at residues 149–160 is interacts with SPRY1, SPRY2, and SPRY4; that stretch reads SIYIHTFCDPLF. The interacts with SPRY1, SPRY2, SPRY3 and SPRY4 stretch occupies residues 167–178; that stretch reads FSNIRINTQKEI.

It belongs to the caveolin family. In terms of assembly, homooligomer. Interacts (via the N-terminus) with DPP4; the interaction is direct. Forms a stable heterooligomeric complex with CAV2 that targets to lipid rafts and drives caveolae formation. Interacts with PACSIN2; this interaction induces membrane tubulation. Interacts with BMX, BTK, CTNNB1, CDH1, GLIPR2, JUP, NOSTRIN, SNAP25 and STX1A. Interacts with SLC7A9. Interacts with TGFBR1. Interacts with CAVIN3 (via leucine-zipper domain) in a cholesterol-sensitive manner. Interacts with CAVIN1. Interacts with EHD2 in a cholesterol-dependent manner. Forms a ternary complex with UBXN6 and VCP; mediates CAV1 targeting to lysosomes for degradation. Interacts with ABCG1; this interaction regulates ABCG1-mediated cholesterol efflux. Interacts with NEU3; this interaction enhances NEU3 sialidase activity within caveola. Interacts (via C-terminus) with SPRY1, SPRY2 (via C-terminus), SPRY3, and SPRY4. Post-translationally, phosphorylated at Tyr-14 by ABL1 in response to oxidative stress. In terms of processing, ubiquitinated. Undergo monoubiquitination and multi- and/or polyubiquitination. Monoubiquitination of N-terminal lysines promotes integration in a ternary complex with UBXN6 and VCP which promotes oligomeric CAV1 targeting to lysosomes for degradation. Ubiquitinated by ZNRF1; leading to degradation and modulation of the TLR4-mediated immune response.

The protein resides in the golgi apparatus membrane. Its subcellular location is the cell membrane. It is found in the membrane. The protein localises to the caveola. It localises to the membrane raft. In terms of biological role, may act as a scaffolding protein within caveolar membranes. Forms a stable heterooligomeric complex with CAV2 that targets to lipid rafts and drives caveolae formation. Mediates the recruitment of CAVIN proteins (CAVIN1/2/3/4) to the caveolae. Interacts directly with G-protein alpha subunits and can functionally regulate their activity. Involved in the costimulatory signal essential for T-cell receptor (TCR)-mediated T-cell activation. Its binding to DPP4 induces T-cell proliferation and NF-kappa-B activation in a T-cell receptor/CD3-dependent manner. Recruits CTNNB1 to caveolar membranes and may regulate CTNNB1-mediated signaling through the Wnt pathway. Negatively regulates TGFB1-mediated activation of SMAD2/3 by mediating the internalization of TGFBR1 from membrane rafts leading to its subsequent degradation. Binds 20(S)-hydroxycholesterol (20(S)-OHC). This Rhinolophus ferrumequinum (Greater horseshoe bat) protein is Caveolin-1 (CAV1).